Consider the following 137-residue polypeptide: ATP synthase epsilon chain (137 aa).

This sequence belongs to the ATPase epsilon chain family. In terms of assembly, F-type ATPases have 2 components, CF(1) - the catalytic core - and CF(0) - the membrane proton channel. CF(1) has five subunits: alpha(3), beta(3), gamma(1), delta(1), epsilon(1). CF(0) has three main subunits: a, b and c.

The protein localises to the cell inner membrane. Functionally, produces ATP from ADP in the presence of a proton gradient across the membrane. This chain is ATP synthase epsilon chain, found in Pseudoalteromonas atlantica (strain T6c / ATCC BAA-1087).